Here is a 171-residue protein sequence, read N- to C-terminus: UPF0312 protein SE_0264 (171 aa).

It belongs to the UPF0312 family.

The polypeptide is UPF0312 protein SE_0264 (Staphylococcus epidermidis (strain ATCC 12228 / FDA PCI 1200)).